A 38-amino-acid chain; its full sequence is Mu-hexatoxin-Mg1b (38 aa).

Intrachain disulfides connect cysteine 1–cysteine 15, cysteine 8–cysteine 20, and cysteine 14–cysteine 34. Serine amide is present on serine 38.

It belongs to the neurotoxin 14 (magi-1) family. 09 (magi-1) subfamily. Expressed by the venom gland.

It is found in the secreted. In terms of biological role, insecticidal neurotoxin. Shows competition for site 3 of insect voltage-gated sodium channels (Nav). This chain is Mu-hexatoxin-Mg1b, found in Macrothele gigas (Japanese funnel web spider).